The primary structure comprises 354 residues: GDSL esterase/lipase At5g03820 (354 aa).

An N-terminal signal peptide occupies residues 1 to 24; that stretch reads MKMFIIMLMTFSVIACFYAGVGTG. The active-site Nucleophile is Ser37. N-linked (GlcNAc...) asparagine glycans are attached at residues Asn66, Asn100, Asn237, Asn256, Asn257, Asn261, and Asn321. Catalysis depends on residues Asp329 and His332.

This sequence belongs to the 'GDSL' lipolytic enzyme family.

It localises to the secreted. The protein is GDSL esterase/lipase At5g03820 of Arabidopsis thaliana (Mouse-ear cress).